The chain runs to 145 residues: MRVVIQRVNHAAVRIDGETVGQIPKGLLLLVGLAEGDGEEQVVKAADKIAKMRIFEDEAGKTNLGIKDVGGQILSVSQFTLLADTKRGNRPSFVHAMRPPKSSQLWEEFNQELVKRGLTVETGEFGADMKVELENDGPFTIVLDL.

The Gly-cisPro motif, important for rejection of L-amino acids motif lies at G137–P138.

The protein belongs to the DTD family. In terms of assembly, homodimer.

The protein resides in the cytoplasm. It catalyses the reaction glycyl-tRNA(Ala) + H2O = tRNA(Ala) + glycine + H(+). It carries out the reaction a D-aminoacyl-tRNA + H2O = a tRNA + a D-alpha-amino acid + H(+). In terms of biological role, an aminoacyl-tRNA editing enzyme that deacylates mischarged D-aminoacyl-tRNAs. Also deacylates mischarged glycyl-tRNA(Ala), protecting cells against glycine mischarging by AlaRS. Acts via tRNA-based rather than protein-based catalysis; rejects L-amino acids rather than detecting D-amino acids in the active site. By recycling D-aminoacyl-tRNA to D-amino acids and free tRNA molecules, this enzyme counteracts the toxicity associated with the formation of D-aminoacyl-tRNA entities in vivo and helps enforce protein L-homochirality. This is D-aminoacyl-tRNA deacylase from Lactobacillus delbrueckii subsp. bulgaricus (strain ATCC BAA-365 / Lb-18).